We begin with the raw amino-acid sequence, 171 residues long: Co-chaperone protein HscB homolog (171 aa).

Positions asparagine 2–glutamine 74 constitute a J domain.

The protein belongs to the HscB family. As to quaternary structure, interacts with HscA and stimulates its ATPase activity.

Functionally, co-chaperone involved in the maturation of iron-sulfur cluster-containing proteins. Seems to help targeting proteins to be folded toward HscA. This Vibrio vulnificus (strain CMCP6) protein is Co-chaperone protein HscB homolog.